The following is a 168-amino-acid chain: Small ribosomal subunit protein uS5 (168 aa).

The S5 DRBM domain maps to 12 to 75; it reads YQEKLVSVTR…DQAKKNMVYI (64 aa).

It belongs to the universal ribosomal protein uS5 family. Part of the 30S ribosomal subunit. Contacts proteins S4 and S8.

Functionally, with S4 and S12 plays an important role in translational accuracy. Its function is as follows. Located at the back of the 30S subunit body where it stabilizes the conformation of the head with respect to the body. The sequence is that of Small ribosomal subunit protein uS5 from Legionella pneumophila (strain Paris).